The sequence spans 144 residues: MLQPKKTKYRKAFKGRIKGDAKGGTTLNFGSYGLKALEPERVTARQIEAARRAITRHIKRQGRLWIRVFPDVPVSKKPAEVRQGKGKGSVEYWAARVKPGRILFELDGVPGPLAASAFERAAMKLPVKTKVVARFGDTSHLGGN.

It belongs to the universal ribosomal protein uL16 family. As to quaternary structure, part of the 50S ribosomal subunit.

Binds 23S rRNA and is also seen to make contacts with the A and possibly P site tRNAs. This Erythrobacter litoralis (strain HTCC2594) protein is Large ribosomal subunit protein uL16.